The primary structure comprises 518 residues: Chaperonin GroEL (518 aa).

ATP is bound by residues 30 to 33, K51, 87 to 91, and G415; these read TLGP and DGTTT.

The protein belongs to the chaperonin (HSP60) family. Forms a cylinder of 14 subunits composed of two heptameric rings stacked back-to-back. Interacts with the co-chaperonin GroES.

It is found in the cytoplasm. The enzyme catalyses ATP + H2O + a folded polypeptide = ADP + phosphate + an unfolded polypeptide.. Its function is as follows. Together with its co-chaperonin GroES, plays an essential role in assisting protein folding. The GroEL-GroES system forms a nano-cage that allows encapsulation of the non-native substrate proteins and provides a physical environment optimized to promote and accelerate protein folding. This chain is Chaperonin GroEL, found in Desulfotalea psychrophila (strain LSv54 / DSM 12343).